A 399-amino-acid polypeptide reads, in one-letter code: DJ-1 protein homolog F (399 aa).

2 consecutive PfpI endopeptidase domains span residues 7-199 (KSVL…ESLG) and 211-394 (TSLL…TALG).

The protein belongs to the peptidase C56 family. As to quaternary structure, homotrimer.

Its function is as follows. May be involved in oxidative stress response. The polypeptide is DJ-1 protein homolog F (DJ1F) (Arabidopsis thaliana (Mouse-ear cress)).